A 283-amino-acid chain; its full sequence is Orotidine 5'-phosphate decarboxylase (283 aa).

Substrate is bound by residues aspartate 40, 62–64, 93–102, tyrosine 220, and arginine 239; these read KTH and DRKFADIGNT. Residue lysine 95 is the Proton donor of the active site.

This sequence belongs to the OMP decarboxylase family.

It catalyses the reaction orotidine 5'-phosphate + H(+) = UMP + CO2. It participates in pyrimidine metabolism; UMP biosynthesis via de novo pathway; UMP from orotate: step 2/2. This Mycosarcoma maydis (Corn smut fungus) protein is Orotidine 5'-phosphate decarboxylase (PYR6).